The primary structure comprises 129 residues: Histone H2A.J (129 aa).

The interval 1–22 (MSGRGKQGGKVRAKAKSRSSRA) is disordered. Residues K6 and K10 each carry the N6-acetyllysine modification. Over residues 7–19 (QGGKVRAKAKSRS) the composition is skewed to basic residues. An N6-lactoyllysine; alternate modification is found at K10. At Q105 the chain carries N5-methylglutamine. T121 is subject to Phosphothreonine; by DCAF1.

Belongs to the histone H2A family. In terms of assembly, the nucleosome is a histone octamer containing two molecules each of H2A, H2B, H3 and H4 assembled in one H3-H4 heterotetramer and two H2A-H2B heterodimers. The octamer wraps approximately 147 bp of DNA. In terms of processing, glutamine methylation at Gln-105 (H2AQ104me) by FBL is specifically dedicated to polymerase I. It is present at 35S ribosomal DNA locus and impairs binding of the FACT complex. Monoubiquitination of Lys-120 (H2AXK119ub) gives a specific tag for epigenetic transcriptional repression. Following DNA double-strand breaks (DSBs), it is ubiquitinated through 'Lys-63' linkage of ubiquitin moieties. Post-translationally, phosphorylation on Ser-2 (H2AS1ph) is enhanced during mitosis. Phosphorylation on Ser-2 by RPS6KA5/MSK1 directly represses transcription. Acetylation of H3 inhibits Ser-2 phosphorylation by RPS6KA5/MSK1. Phosphorylation at Thr-121 (H2AT120ph) by DCAF1 is present in the regulatory region of many tumor suppresor genes and down-regulates their transcription.

It localises to the nucleus. It is found in the chromosome. In terms of biological role, core component of nucleosome. Nucleosomes wrap and compact DNA into chromatin, limiting DNA accessibility to the cellular machineries which require DNA as a template. Histones thereby play a central role in transcription regulation, DNA repair, DNA replication and chromosomal stability. DNA accessibility is regulated via a complex set of post-translational modifications of histones, also called histone code, and nucleosome remodeling. The sequence is that of Histone H2A.J from Bos taurus (Bovine).